The following is a 95-amino-acid chain: Histone-like DNA-binding protein (95 aa).

It belongs to the bacterial histone-like protein family.

The sequence is that of Histone-like DNA-binding protein from Rickettsia rickettsii.